An 805-amino-acid polypeptide reads, in one-letter code: Pentatricopeptide repeat-containing protein At4g01570 (805 aa).

PPR repeat units follow at residues 91–125, 126–160, 161–196, 211–241, 247–277, 288–322, 323–357, 358–392, 393–427, 428–462, 463–497, 593–627, 629–663, 664–698, 699–733, and 734–768; these read SATA…GVNL, DQTM…GDCL, NPSV…DNHS, GTVA…LKGM, DTWS…MKER, DICT…GHEP, DNST…GFVP, DTIV…GVRA, SCWT…GQFV, DAIT…GFSV, DLVT…NLVP, DVDM…GVTD, TSYT…FCAA, DIAT…GGYL, DIVM…GINP, and DVVS…GCLP.

The protein belongs to the PPR family. P subfamily.

The chain is Pentatricopeptide repeat-containing protein At4g01570 from Arabidopsis thaliana (Mouse-ear cress).